Consider the following 376-residue polypeptide: MPMPNLPKELVEEILSFVPATYLKRLSATCKPWNRLIHNDKRFARKHYDNAAKEFLVFMMRKNFRIIRRGVNLHGADPSAEVKGELTLPDPYFKNSADEFHIDRVFHCDGLLLCTSKLERRMVVWNPLTGETKWIQTHEEGDNFFLGYSQEDKNISCKKSYKIMGFYRSGSKVWEYDFNSDSWRVLNGILPNWYFDKSYKCVSLKGNTYMLAGAVTDMGFDLSLQSYDFSTEKFAPVSLPVPSQARSLNGANRLSVVRGEKLALLYRRDKRSKAEIWVTNKIDDTTEGAVSWTKVLELDLSRELHALFTSNFLVDEEKKVFICCVSWKEDEDENKSNKVYIVGEDNIVKEIDSGEDATSGCEPTILSLYVPSLVYM.

The F-box domain maps to 1 to 46 (MPMPNLPKELVEEILSFVPATYLKRLSATCKPWNRLIHNDKRFARK).

The chain is Putative F-box protein At3g18330 from Arabidopsis thaliana (Mouse-ear cress).